A 344-amino-acid chain; its full sequence is Probable dual-specificity RNA methyltransferase RlmN (344 aa).

Glu-92 acts as the Proton acceptor in catalysis. In terms of domain architecture, Radical SAM core spans 98 to 325 (DEDRATLCVS…TTIRASRGED (228 aa)). Cysteines 105 and 330 form a disulfide. Positions 112, 116, and 119 each coordinate [4Fe-4S] cluster. S-adenosyl-L-methionine is bound by residues 157–158 (GE), Ser-189, 211–213 (SLH), and His-287. Cys-330 (S-methylcysteine intermediate) is an active-site residue.

This sequence belongs to the radical SAM superfamily. RlmN family. [4Fe-4S] cluster serves as cofactor.

Its subcellular location is the cytoplasm. It carries out the reaction adenosine(2503) in 23S rRNA + 2 reduced [2Fe-2S]-[ferredoxin] + 2 S-adenosyl-L-methionine = 2-methyladenosine(2503) in 23S rRNA + 5'-deoxyadenosine + L-methionine + 2 oxidized [2Fe-2S]-[ferredoxin] + S-adenosyl-L-homocysteine. The catalysed reaction is adenosine(37) in tRNA + 2 reduced [2Fe-2S]-[ferredoxin] + 2 S-adenosyl-L-methionine = 2-methyladenosine(37) in tRNA + 5'-deoxyadenosine + L-methionine + 2 oxidized [2Fe-2S]-[ferredoxin] + S-adenosyl-L-homocysteine. Its function is as follows. Specifically methylates position 2 of adenine 2503 in 23S rRNA and position 2 of adenine 37 in tRNAs. This Bacteroides fragilis (strain YCH46) protein is Probable dual-specificity RNA methyltransferase RlmN.